Reading from the N-terminus, the 156-residue chain is Deoxyuridine 5'-triphosphate nucleotidohydrolase (156 aa).

Substrate contacts are provided by residues 76-78, Asn89, 93-95, and Lys103; these read RSG and TVD.

It belongs to the dUTPase family. It depends on Mg(2+) as a cofactor.

The catalysed reaction is dUTP + H2O = dUMP + diphosphate + H(+). The protein operates within pyrimidine metabolism; dUMP biosynthesis; dUMP from dCTP (dUTP route): step 2/2. This enzyme is involved in nucleotide metabolism: it produces dUMP, the immediate precursor of thymidine nucleotides and it decreases the intracellular concentration of dUTP so that uracil cannot be incorporated into DNA. The sequence is that of Deoxyuridine 5'-triphosphate nucleotidohydrolase from Agrobacterium fabrum (strain C58 / ATCC 33970) (Agrobacterium tumefaciens (strain C58)).